The primary structure comprises 248 residues: ATP synthase subunit a, chloroplastic (248 aa).

5 consecutive transmembrane segments (helical) span residues 35–55 (GQVF…AIAG), 94–114 (IPYI…GALI), 133–153 (INTT…AGLS), 202–222 (VFTL…GLFA), and 224–244 (SIQA…ALEG).

Belongs to the ATPase A chain family. As to quaternary structure, F-type ATPases have 2 components, CF(1) - the catalytic core - and CF(0) - the membrane proton channel. CF(1) has five subunits: alpha(3), beta(3), gamma(1), delta(1), epsilon(1). CF(0) has four main subunits: a, b, b' and c.

It is found in the plastid. The protein resides in the chloroplast thylakoid membrane. Key component of the proton channel; it plays a direct role in the translocation of protons across the membrane. This chain is ATP synthase subunit a, chloroplastic, found in Antithamnion sp. (Red alga).